Reading from the N-terminus, the 80-residue chain is uncharacterized protein (80 aa).

It belongs to the BolA/IbaG family.

This is an uncharacterized protein from Buchnera aphidicola subsp. Acyrthosiphon pisum (strain APS) (Acyrthosiphon pisum symbiotic bacterium).